Here is a 172-residue protein sequence, read N- to C-terminus: Translationally-controlled tumor protein (172 aa).

The region spanning 1–172 (MIIYRDLISH…FKDGLEMEKC (172 aa)) is the TCTP domain. 2 positions are modified to phosphoserine: Ser-46 and Ser-53. Ser-64 bears the Phosphoserine; by PLK1 mark. Residues 70–172 (VDIVMNHHLQ…FKDGLEMEKC (103 aa)) are required for reduction of TSC22D1 protein stability.

The protein belongs to the TCTP family. As to quaternary structure, homodimer. Interacts with STEAP3. Interacts with TSC22D1; interaction results in the destabilization of TSC22D1 protein.

It is found in the cytoplasm. In terms of biological role, involved in calcium binding and microtubule stabilization. Acts as a negative regulator of TSC22D1-mediated apoptosis, via interaction with and destabilization of TSC22D1 protein. This is Translationally-controlled tumor protein (Tpt1) from Mus musculus (Mouse).